A 185-amino-acid chain; its full sequence is Elongation factor P (185 aa).

Belongs to the elongation factor P family.

The protein resides in the cytoplasm. It functions in the pathway protein biosynthesis; polypeptide chain elongation. In terms of biological role, involved in peptide bond synthesis. Stimulates efficient translation and peptide-bond synthesis on native or reconstituted 70S ribosomes in vitro. Probably functions indirectly by altering the affinity of the ribosome for aminoacyl-tRNA, thus increasing their reactivity as acceptors for peptidyl transferase. This is Elongation factor P from Mesoplasma florum (strain ATCC 33453 / NBRC 100688 / NCTC 11704 / L1) (Acholeplasma florum).